The primary structure comprises 144 residues: Toxin MT0934 (144 aa).

Functionally, toxic component of a type II toxin-antitoxin (TA) system. Its toxic effect is neutralized by coexpression with cognate antitoxin MT0933. This Mycobacterium tuberculosis (strain CDC 1551 / Oshkosh) protein is Toxin MT0934.